Here is a 341-residue protein sequence, read N- to C-terminus: Basic membrane protein B (341 aa).

Positions 1–14 (MRIAIFIFGILLTS) are cleaved as a signal peptide. A lipid anchor (N-palmitoyl cysteine) is attached at C15. A lipid anchor (S-diacylglycerol cysteine) is attached at C15.

The protein belongs to the BMP lipoprotein family. As to quaternary structure, monomer.

The protein localises to the cell inner membrane. In terms of biological role, may be part of an ABC-type nucleoside uptake system involved in the purine salvage pathway. This Borreliella afzelii (strain PKo) (Borrelia afzelii) protein is Basic membrane protein B (bmpB).